We begin with the raw amino-acid sequence, 360 residues long: U7 snRNA-associated Sm-like protein LSm11 (360 aa).

Residues methionine 1–aspartate 29 form a disordered region. Serine 15 and serine 21 each carry phosphoserine. The residue at position 41 (arginine 41) is an Omega-N-methylarginine. The interval arginine 68–asparagine 143 is disordered. Residues arginine 78–glycine 94 are compositionally biased toward low complexity. Lysine 120 participates in a covalent cross-link: Glycyl lysine isopeptide (Lys-Gly) (interchain with G-Cter in SUMO2). At serine 154 the chain carries Phosphoserine. The 76-residue stretch at serine 154 to leucine 229 folds into the Sm domain. Residues valine 171–threonine 204 are SM 1. The disordered stretch occupies residues alanine 268–valine 333. Serine 280 is subject to Phosphoserine. Positions glycine 299 to glycine 322 are enriched in polar residues. The interval isoleucine 343 to valine 356 is SM 2.

Belongs to the snRNP Sm proteins family. In terms of assembly, component of the heptameric ring U7 snRNP complex, or U7 Sm protein core complex, at least composed of LSM10, LSM11, SNRPB, SNRPD3, SNRPE, SNRPF, SNRPG and U7 snRNA. Formation of the U7 snRNP is an ATP-dependent process mediated by a specialized SMN complex containing at least the Sm protein core complex and additionally, the U7-specific LSM10 and LSM11 proteins. Identified in a histone pre-mRNA complex, at least composed of ERI1, LSM11, SLBP, SNRPB, SYNCRIP and YBX1. Interacts (via the Sm domains) with CLNS1A. Interacts with SMN and ZNF473. Interacts with PRMT5 and WDR77.

Its subcellular location is the nucleus. Component of the U7 snRNP complex that is involved in the histone 3'-end pre-mRNA processing. Increases U7 snRNA levels but not histone 3'-end pre-mRNA processing activity, when overexpressed. Required for cell cycle progression from G1 to S phases. Binds specifically to the Sm-binding site of U7 snRNA. The protein is U7 snRNA-associated Sm-like protein LSm11 of Homo sapiens (Human).